Consider the following 388-residue polypeptide: Chalcone synthase DIV (388 aa).

Residue C164 is part of the active site.

The protein belongs to the thiolase-like superfamily. Chalcone/stilbene synthases family.

The catalysed reaction is (E)-4-coumaroyl-CoA + 3 malonyl-CoA + 3 H(+) = 2',4,4',6'-tetrahydroxychalcone + 3 CO2 + 4 CoA. Its pathway is secondary metabolite biosynthesis; flavonoid biosynthesis. Functionally, the primary product of this enzyme is 4,2',4',6'-tetrahydroxychalcone (also termed naringenin-chalcone or chalcone) which can under specific conditions spontaneously isomerize into naringenin. This chain is Chalcone synthase DIV (CHS-DIV), found in Ipomoea batatas (Sweet potato).